The chain runs to 278 residues: MTKPNARVKVGNIIFSNEMPLSLIAGPCQMESRDHAFEMAGRIKTMTDQLGIGFVYKSSYDKANRTSLSAARGIGLEKAMAIFSDLKKEFDCPILTDVHTEEQCTIVSSTVDILQIPAFLCRQTDLLVAAAKTGCVVNIKKGQFLAPWDMENVLKKVVHSGNPNVMLCERGTSFGYNRLISDMRSLPILRSFGAPVIFDATHSVQEPGGQGASSGGQRQFVEVLARAAVSVGVAGIFLETHQDPDHAPSDGPNMIKIDDLQRLIETLMEFDDLSKKLN.

It belongs to the KdsA family.

The protein localises to the cytoplasm. The catalysed reaction is D-arabinose 5-phosphate + phosphoenolpyruvate + H2O = 3-deoxy-alpha-D-manno-2-octulosonate-8-phosphate + phosphate. It participates in carbohydrate biosynthesis; 3-deoxy-D-manno-octulosonate biosynthesis; 3-deoxy-D-manno-octulosonate from D-ribulose 5-phosphate: step 2/3. Its pathway is bacterial outer membrane biogenesis; lipopolysaccharide biosynthesis. The sequence is that of 2-dehydro-3-deoxyphosphooctonate aldolase from Bartonella tribocorum (strain CIP 105476 / IBS 506).